An 85-amino-acid polypeptide reads, in one-letter code: Large ribosomal subunit protein bL27 (85 aa).

The disordered stretch occupies residues 1 to 23 (MAHKKAGGSSRNGRDSESKRLGV).

Belongs to the bacterial ribosomal protein bL27 family.

The protein is Large ribosomal subunit protein bL27 of Methylococcus capsulatus (strain ATCC 33009 / NCIMB 11132 / Bath).